The primary structure comprises 285 residues: MKYIGAHVSAAGGLANAAIRAVEIDATAFALFTKNQRQWRAAPLTTQTIDEFKAACEKYHYTSAQILPHDSYLINLGHPVTEALEKSRDAFIDEMQRCEQLGLSLLNFHPGSHLMQISEEDCLARIAESINIALDKTQGVTAVIENTAGQGSNLGFKFEHLAAIIDGVEDKFRVGVCIDTCHAFAAGYDLRTPAECEKTFADFARIVGFKYLRGMHLNDAKSTFGSRVDRHHSLGEGNIGHDAFRWIMQDDRFDGIPLILETINPDIWAEEIAWLKAQQTEKAVA.

Zn(2+)-binding residues include histidine 69, histidine 109, glutamate 145, aspartate 179, histidine 182, histidine 216, aspartate 229, histidine 231, and glutamate 261.

This sequence belongs to the AP endonuclease 2 family. It depends on Zn(2+) as a cofactor.

The enzyme catalyses Endonucleolytic cleavage to 5'-phosphooligonucleotide end-products.. Its function is as follows. Endonuclease IV plays a role in DNA repair. It cleaves phosphodiester bonds at apurinic or apyrimidinic (AP) sites, generating a 3'-hydroxyl group and a 5'-terminal sugar phosphate. The protein is Probable endonuclease 4 of Shigella sonnei (strain Ss046).